A 135-amino-acid polypeptide reads, in one-letter code: Ribonuclease VapC26 (135 aa).

In terms of domain architecture, PINc spans 1-118; the sequence is MIIDTSALLA…TRTILTLDRR (118 aa). Mg(2+) is bound by residues Asp-4 and Asp-97.

It belongs to the PINc/VapC protein family. Mg(2+) serves as cofactor.

Functionally, toxic component of a type II toxin-antitoxin (TA) system. An RNase. Upon expression in M.smegmatis inhibits colony formation. Its toxic effect is neutralized by coexpression with cognate antitoxin VapB26. The protein is Ribonuclease VapC26 of Mycobacterium tuberculosis (strain ATCC 25618 / H37Rv).